The following is a 377-amino-acid chain: uncharacterized protein (377 aa).

Composition is skewed to polar residues over residues 1–11 (MSSIQGTSGSS) and 31–43 (PSGQ…AVGK). Disordered regions lie at residues 1-43 (MSSI…AVGK), 109-141 (SSEE…IARN), and 328-377 (SSSP…RGFQ). The span at 334–345 (EDPRSLRDRLRD) shows a compositional bias: basic and acidic residues.

It belongs to the chlamydial CPn_0499/CT_392/TC_0671 family.

This is an uncharacterized protein from Chlamydia trachomatis serovar D (strain ATCC VR-885 / DSM 19411 / UW-3/Cx).